Consider the following 396-residue polypeptide: Elongation factor Tu 2 (396 aa).

Residues 10 to 206 (KPHINVGTIG…AMDAHIPQPE (197 aa)) enclose the tr-type G domain. A G1 region spans residues 19–26 (GHVDHGKT). Position 19 to 26 (19 to 26 (GHVDHGKT)) interacts with GTP. T26 contributes to the Mg(2+) binding site. A G2 region spans residues 60–64 (GITIA). Positions 81–84 (DCPG) are G3. GTP is bound by residues 81–85 (DCPGH) and 136–139 (NKAD). The interval 136 to 139 (NKAD) is G4. Positions 174-176 (SAL) are G5.

The protein belongs to the TRAFAC class translation factor GTPase superfamily. Classic translation factor GTPase family. EF-Tu/EF-1A subfamily. In terms of assembly, monomer.

The protein resides in the cytoplasm. It catalyses the reaction GTP + H2O = GDP + phosphate + H(+). Its function is as follows. GTP hydrolase that promotes the GTP-dependent binding of aminoacyl-tRNA to the A-site of ribosomes during protein biosynthesis. This Halorhodospira halophila (strain DSM 244 / SL1) (Ectothiorhodospira halophila (strain DSM 244 / SL1)) protein is Elongation factor Tu 2.